Reading from the N-terminus, the 76-residue chain is Acyl carrier protein (76 aa).

One can recognise a Carrier domain in the interval 1 to 74 (MEERIKEIIA…DVINYIKEKK (74 aa)). Ser34 carries the O-(pantetheine 4'-phosphoryl)serine modification.

This sequence belongs to the acyl carrier protein (ACP) family. In terms of processing, 4'-phosphopantetheine is transferred from CoA to a specific serine of apo-ACP by AcpS. This modification is essential for activity because fatty acids are bound in thioester linkage to the sulfhydryl of the prosthetic group.

Its subcellular location is the cytoplasm. The protein operates within lipid metabolism; fatty acid biosynthesis. In terms of biological role, carrier of the growing fatty acid chain in fatty acid biosynthesis. This Persephonella marina (strain DSM 14350 / EX-H1) protein is Acyl carrier protein.